The primary structure comprises 834 residues: MSQTIDLTLDGLSCGHCVKRVKESLEQRPDVEQADVSITEAHVTGTASAEQLIETIKQAGYDASVSHPKAKPLAESSIPSEALTAVSEALPAATADDDDSQQLLLSGMSCASCVTRVQNALQSVPGVTQARVNLAERTALVMGSASPQDLVQAVEKAGYGAEAIEDDAKRRERQQETAVATMKRFRWQAIVALAVGIPVMVWGMIGDNMMVTADNRSLWLVIGLITLAVMVFAGGHFYRSAWKSLLNGAATMDTLVALGTGVAWLYSMSVNLWPQWFPMEARHLYYEASAMIIGLINLGHMLEARARQRSSKALEKLLDLTPPTARLVTDEGEKSVPLAEVQPGMLLRLTTGDRVPVDGEITQGEAWLDEAMLTGEPIPQQKGEGDSVHAGTVVQDGSVLFRASAVGSHTTLSRIIRMVRQAQSSKPEIGQLADKISAVFVPVVVVIALVSAAIWYFFGPAPQIVYTLVIATTVLIIACPCALGLATPMSIISGVGRAAEFGVLVRDADALQRASTLDTVVFDKTGTLTEGKPQVVAVKTFADFDEAQALRLAAALEQGSSHPLARAILDKASDMQLPQVNGFRTLRGLGVSGEAEGHALLLGNQALLNDQQVDTKAIEADISAQASQGATPVLLAVDGKAVALLAVRDPLRSDSVAALQRLHKAGYRLVMLTGDNPTTANAIAKEAGIDEVIAGVLPDGKAEAIKRLQSEGRQVAMVGDGINDAPALAQADVGIAMGGGSDVAIETAAITLMRHSLMGVADALAISRATLRNMKQNLLGAFIYNSIGIPVAAGILWPFTGTLLNPVVAGAAMALSSITVVSNANRLLRFKPKE.

HMA domains lie at 3–64 and 99–162; these read QTID…YDAS and DSQQ…YGAE. Residues C14, C17, C110, and C113 each coordinate Cu(+). 6 helical membrane passes run 187–207, 218–238, 254–274, 284–304, 438–458, and 464–484; these read WQAI…MIGD, LWLV…GHFY, TLVA…NLWP, LYYE…MLEA, AVFV…WYFF, and IVYT…CALG. D523 (4-aspartylphosphate intermediate) is an active-site residue. Positions 720 and 724 each coordinate Mg(2+). 2 helical membrane passes run 779-799 and 801-821; these read LGAF…LWPF and GTLL…ITVV.

Belongs to the cation transport ATPase (P-type) (TC 3.A.3) family. Type IB subfamily.

Its subcellular location is the cell inner membrane. The protein localises to the cytoplasm. It catalyses the reaction Cu(+)(in) + ATP + H2O = Cu(+)(out) + ADP + phosphate + H(+). Its function is as follows. Involved in Cu(+) export. In terms of biological role, probably also encodes a cytoplasmic copper chaperone CopA(Z) that is produced by programmed ribosomal frameshifting. The sequence is that of Copper-exporting P-type ATPase (copA) from Escherichia coli O157:H7.